The primary structure comprises 318 residues: Transaldolase (318 aa).

The Schiff-base intermediate with substrate role is filled by Lys-132.

It belongs to the transaldolase family. Type 1 subfamily. In terms of assembly, homodimer.

It localises to the cytoplasm. It carries out the reaction D-sedoheptulose 7-phosphate + D-glyceraldehyde 3-phosphate = D-erythrose 4-phosphate + beta-D-fructose 6-phosphate. It functions in the pathway carbohydrate degradation; pentose phosphate pathway; D-glyceraldehyde 3-phosphate and beta-D-fructose 6-phosphate from D-ribose 5-phosphate and D-xylulose 5-phosphate (non-oxidative stage): step 2/3. Functionally, transaldolase is important for the balance of metabolites in the pentose-phosphate pathway. This Shewanella sp. (strain MR-7) protein is Transaldolase.